A 265-amino-acid chain; its full sequence is Phosphatidylglycerol--prolipoprotein diacylglyceryl transferase (265 aa).

The next 4 membrane-spanning stretches (helical) occupy residues 17–37, 56–76, 92–112, and 117–137; these read LSIR…WLLG, LVTY…MLFY, WQGG…VWFF, and GKGF…GLFA. Arg139 contributes to the a 1,2-diacyl-sn-glycero-3-phospho-(1'-sn-glycerol) binding site. 3 helical membrane passes run 173-193, 201-221, and 235-255; these read PSQL…VWLY, GAVS…VELV, and WLTM…WLLA.

Belongs to the Lgt family.

The protein localises to the cell inner membrane. It carries out the reaction L-cysteinyl-[prolipoprotein] + a 1,2-diacyl-sn-glycero-3-phospho-(1'-sn-glycerol) = an S-1,2-diacyl-sn-glyceryl-L-cysteinyl-[prolipoprotein] + sn-glycerol 1-phosphate + H(+). The protein operates within protein modification; lipoprotein biosynthesis (diacylglyceryl transfer). In terms of biological role, catalyzes the transfer of the diacylglyceryl group from phosphatidylglycerol to the sulfhydryl group of the N-terminal cysteine of a prolipoprotein, the first step in the formation of mature lipoproteins. In Solidesulfovibrio magneticus (strain ATCC 700980 / DSM 13731 / RS-1) (Desulfovibrio magneticus), this protein is Phosphatidylglycerol--prolipoprotein diacylglyceryl transferase.